Here is a 341-residue protein sequence, read N- to C-terminus: Ribosomal RNA small subunit methyltransferase H (341 aa).

Residues Gly-47–Tyr-49, Asp-64, Phe-91, Asp-109, and Gln-116 each bind S-adenosyl-L-methionine.

This sequence belongs to the methyltransferase superfamily. RsmH family.

The protein resides in the cytoplasm. The catalysed reaction is cytidine(1402) in 16S rRNA + S-adenosyl-L-methionine = N(4)-methylcytidine(1402) in 16S rRNA + S-adenosyl-L-homocysteine + H(+). Its function is as follows. Specifically methylates the N4 position of cytidine in position 1402 (C1402) of 16S rRNA. The polypeptide is Ribosomal RNA small subunit methyltransferase H (Rhizobium johnstonii (strain DSM 114642 / LMG 32736 / 3841) (Rhizobium leguminosarum bv. viciae)).